A 27-amino-acid chain; its full sequence is Dermaseptin-like peptide (27 aa).

In terms of biological role, has antimicrobial activity against the Gram-positive bacterium M.luteus and the yeast C.albicans. Has hemolytic activity on human and duck erythrocytes. This Schistosoma mansoni (Blood fluke) protein is Dermaseptin-like peptide.